The sequence spans 338 residues: Peroxidase 15 (338 aa).

A signal peptide spans 1–22 (MARIGSFLIILYLIYALTLCIC). Disulfide bonds link cysteine 45–cysteine 125, cysteine 78–cysteine 83, cysteine 131–cysteine 332, and cysteine 210–cysteine 242. The active-site Proton acceptor is histidine 76. Residues aspartate 77, valine 80, glycine 82, aspartate 84, and serine 86 each contribute to the Ca(2+) site. Position 173 (proline 173) interacts with substrate. N-linked (GlcNAc...) asparagine glycosylation occurs at asparagine 176. Histidine 203 is a heme b binding site. Threonine 204 contributes to the Ca(2+) binding site. N-linked (GlcNAc...) asparagine glycosylation is found at asparagine 219 and asparagine 250. Ca(2+) is bound by residues aspartate 255, serine 258, and aspartate 263.

The protein belongs to the peroxidase family. Classical plant (class III) peroxidase subfamily. The cofactor is heme b. Ca(2+) serves as cofactor.

The protein localises to the secreted. The enzyme catalyses 2 a phenolic donor + H2O2 = 2 a phenolic radical donor + 2 H2O. Removal of H(2)O(2), oxidation of toxic reductants, biosynthesis and degradation of lignin, suberization, auxin catabolism, response to environmental stresses such as wounding, pathogen attack and oxidative stress. These functions might be dependent on each isozyme/isoform in each plant tissue. The protein is Peroxidase 15 (PER15) of Arabidopsis thaliana (Mouse-ear cress).